The following is a 192-amino-acid chain: Adenylate kinase (192 aa).

10 to 15 (GAGKGT) lines the ATP pocket. Residues 30-59 (STGDMLREAIEKETEIGKQAKIFIESGALV) form an NMP region. Residues T31, R36, 57-59 (ALV), 85-88 (GYPR), and Q92 each bind AMP. Residues 126 to 142 (KRVEEVVAVGGKIRSDD) are LID. R127 contacts ATP. 2 residues coordinate AMP: R139 and R150. A178 contributes to the ATP binding site.

Belongs to the adenylate kinase family. As to quaternary structure, monomer.

Its subcellular location is the cytoplasm. The enzyme catalyses AMP + ATP = 2 ADP. It participates in purine metabolism; AMP biosynthesis via salvage pathway; AMP from ADP: step 1/1. Functionally, catalyzes the reversible transfer of the terminal phosphate group between ATP and AMP. Plays an important role in cellular energy homeostasis and in adenine nucleotide metabolism. This chain is Adenylate kinase, found in Bartonella bacilliformis (strain ATCC 35685 / KC583 / Herrer 020/F12,63).